Consider the following 479-residue polypeptide: Glutamate--tRNA ligase (479 aa).

Positions 11–21 (PSPTGYLHIGG) match the 'HIGH' region motif. Residues C108, C110, C135, and E137 each coordinate Zn(2+). The short motif at 250–254 (KLSKR) is the 'KMSKS' region element. K253 contributes to the ATP binding site.

The protein belongs to the class-I aminoacyl-tRNA synthetase family. Glutamate--tRNA ligase type 1 subfamily. Monomer. It depends on Zn(2+) as a cofactor.

It localises to the cytoplasm. It carries out the reaction tRNA(Glu) + L-glutamate + ATP = L-glutamyl-tRNA(Glu) + AMP + diphosphate. Functionally, catalyzes the attachment of glutamate to tRNA(Glu) in a two-step reaction: glutamate is first activated by ATP to form Glu-AMP and then transferred to the acceptor end of tRNA(Glu). The protein is Glutamate--tRNA ligase of Myxococcus xanthus (strain DK1622).